The sequence spans 574 residues: MPVSLSTALRVVGTSLFALAVLGGILAAYVTGYQFIHTEKHYLSFGLYGAILGLHLFIQSLFAFLEHRRMRAERQPVRLGRSVALCIAAYQEDPDYLKKCLLSVKRIAFPDLKVVMVVDGNGPDDTYMLDIFHDVMGSERAGSYVWRSNFHARGEGETEAGLQEGLAHVQALVRSTTYSCILQKWGGKREVMYTAFRALGDSVDYIQVCDSDTVLDPACTAEMLRILEADPRVGGVGGDVQVWRRGGDGTHGGTALALVALTPSPPQILNKYDSWISFLSSVRYWMAFNVERACQSYFGCVQCISGPLGMYRNALLQQFLEDWYHQTFLGTKCSFGDDRHLTNRVLSLGYQTKYTARSRCLTETPTRYLRWLNQQTRWSKSYFREWLYNALWFHKHHLWMTYESVVTGFFPFFLIATVIQLFYRGRIWNILLFLLTVQLVGIIKATYACFLRGSAEMIFVSLYALLYMSSLLPAKMFAIATINKSGWGTSGRRTIVVNFVGLLPVSVWAAVLLGGLAYTAYSQDLLSDTEVAFLISGAVLYACYWVALLTLYLAMVARRCGKRKEQCGLVFAEV.

Residues 1 to 15 (MPVSLSTALRVVGTS) lie on the Cytoplasmic side of the membrane. The helical transmembrane segment at 16–36 (LFALAVLGGILAAYVTGYQFI) threads the bilayer. The Extracellular segment spans residues 37-44 (HTEKHYLS). A helical membrane pass occupies residues 45–65 (FGLYGAILGLHLFIQSLFAFL). Residues 66-398 (EHRRMRAERQ…NALWFHKHHL (333 aa)) are Cytoplasmic-facing. Residues 399 to 419 (WMTYESVVTGFFPFFLIATVI) traverse the membrane as a helical segment. Residues 420 to 429 (QLFYRGRIWN) are Extracellular-facing. A helical transmembrane segment spans residues 430 to 450 (ILLFLLTVQLVGIIKATYACF). Over 451–456 (LRGSAE) the chain is Cytoplasmic. Residues 457–477 (MIFVSLYALLYMSSLLPAKMF) traverse the membrane as a helical segment. The Extracellular segment spans residues 478–494 (AIATINKSGWGTSGRRT). Residues 495–515 (IVVNFVGLLPVSVWAAVLLGG) traverse the membrane as a helical segment. Over 516-530 (LAYTAYSQDLLSDTE) the chain is Cytoplasmic. A helical transmembrane segment spans residues 531–551 (VAFLISGAVLYACYWVALLTL). The Extracellular segment spans residues 552-574 (YLAMVARRCGKRKEQCGLVFAEV).

Belongs to the NodC/HAS family. Requires Mg(2+) as cofactor. O-GlcNAcylation increases the hyaluronan synthase activity, HAS3 stability and its plasma membrane residence. The concentration of UDP-GlcNAc controls the level of O-GlcNAc modification.

Its subcellular location is the cell membrane. It is found in the golgi apparatus membrane. The protein localises to the golgi apparatus. It localises to the trans-Golgi network membrane. The protein resides in the cytoplasmic vesicle. It carries out the reaction [hyaluronan](n) + UDP-N-acetyl-alpha-D-glucosamine = N-acetyl-beta-D-glucosaminyl-(1-&gt;4)-[hyaluronan](n) + UDP + H(+). The enzyme catalyses N-acetyl-beta-D-glucosaminyl-(1-&gt;4)-[hyaluronan](n) + UDP-alpha-D-glucuronate = [hyaluronan](n+1) + UDP + H(+). Its pathway is glycan biosynthesis; hyaluronan biosynthesis. Functionally, catalyzes the addition of GlcNAc or GlcUA monosaccharides to the nascent hyaluronan polymer. Therefore, it is essential to hyaluronan synthesis a major component of most extracellular matrices that has a structural role in tissues architectures and regulates cell adhesion, migration and differentiation. This is one of three isoenzymes responsible for cellular hyaluronan synthesis. The polypeptide is Hyaluronan synthase 3 (HAS3) (Gallus gallus (Chicken)).